Consider the following 395-residue polypeptide: Acetate kinase (395 aa).

N8 provides a ligand contact to Mg(2+). K15 is an ATP binding site. Substrate is bound at residue R89. D146 (proton donor/acceptor) is an active-site residue. ATP-binding positions include 206–210 (HLGNG), 281–283 (DLR), and 329–333 (GIGEN). Residue E382 coordinates Mg(2+).

This sequence belongs to the acetokinase family. In terms of assembly, homodimer. The cofactor is Mg(2+). Mn(2+) serves as cofactor.

It localises to the cytoplasm. It carries out the reaction acetate + ATP = acetyl phosphate + ADP. The protein operates within metabolic intermediate biosynthesis; acetyl-CoA biosynthesis; acetyl-CoA from acetate: step 1/2. With respect to regulation, induced by glucose excess, the induction may be mediated by CcpA transcriptional regulator. Functionally, catalyzes the formation of acetyl phosphate from acetate and ATP. Can also catalyze the reverse reaction. Appears to favor the formation of acetate. Involved in the secretion of excess carbohydrate. The chain is Acetate kinase from Bacillus subtilis (strain 168).